A 175-amino-acid chain; its full sequence is Beta-carotene hydroxylase (175 aa).

The Fatty acid hydroxylase domain occupies 11–136 (FVTVIGMEVI…RGKEGCVSFG (126 aa)).

It belongs to the sterol desaturase family.

It carries out the reaction all-trans-beta-carotene + 4 reduced [2Fe-2S]-[ferredoxin] + 2 O2 + 4 H(+) = all-trans-zeaxanthin + 4 oxidized [2Fe-2S]-[ferredoxin] + 2 H2O. It functions in the pathway carotenoid biosynthesis; zeaxanthin biosynthesis. Catalyzes the hydroxylation reaction from beta-carotene to zeaxanthin. This chain is Beta-carotene hydroxylase (crtZ), found in Pantoea ananas (Erwinia uredovora).